Consider the following 340-residue polypeptide: Ribonucleoside-diphosphate reductase small subunit (340 aa).

The helical transmembrane segment at 180–200 threads the bilayer; the sequence is FILMILIEGIFFAASFAAIAY.

The protein belongs to the ribonucleoside diphosphate reductase small chain family. As to quaternary structure, heterotetramer composed of a homodimer of the large subunit (R1) and a homodimer of the small subunit (R2). Larger multisubunit protein complex are also active, composed of (R1)n(R2)n. It depends on Fe cation as a cofactor.

It is found in the host membrane. It catalyses the reaction a 2'-deoxyribonucleoside 5'-diphosphate + [thioredoxin]-disulfide + H2O = a ribonucleoside 5'-diphosphate + [thioredoxin]-dithiol. Functionally, ribonucleoside-diphosphate reductase holoenzyme provides the precursors necessary for viral DNA synthesis. Allows virus growth in non-dividing cells, as well as reactivation from latency in infected hosts. Catalyzes the biosynthesis of deoxyribonucleotides from the corresponding ribonucleotides. The protein is Ribonucleoside-diphosphate reductase small subunit of Human herpesvirus 1 (strain 17) (HHV-1).